The sequence spans 426 residues: Glutamate/glutamine/aspartate/asparagine transport system permease protein BztB (426 aa).

The next 8 membrane-spanning stretches (helical) occupy residues 25–45 (SITIQIVVLLLFLAGLVWLLN), 96–116 (LLVSVLGCILATILGTIIGVL), 132–152 (VETFRNIPLLLWILLMGTILA), 211–231 (LPVSLNALAILAVMSASFWGW), 252–272 (WWPSLLILFAPISALLYGLGF), 293–313 (SFTALLIALTLYTAAFIAEIV), 340–360 (SLVILPQALRVIVPPLISQFL), and 396–416 (MLLMMLIYLTISLTISSLMNL). The ABC transmembrane type-1 domain occupies 92–414 (LLNTLLVSVL…TISLTISSLM (323 aa)).

Belongs to the binding-protein-dependent transport system permease family. HisMQ subfamily. As to quaternary structure, bztB and BztC form a heterodimer which can form a membrane complex with a homodimer of BztD.

The protein resides in the cell inner membrane. Part of a binding-protein-dependent transport system for glutamate, glutamine, aspartate and asparagine. Probably responsible for the translocation of the substrate across the membrane. This is Glutamate/glutamine/aspartate/asparagine transport system permease protein BztB (bztB) from Rhodobacter capsulatus (strain ATCC BAA-309 / NBRC 16581 / SB1003).